Here is an 813-residue protein sequence, read N- to C-terminus: Glycerol-3-phosphate acyltransferase (813 aa).

The short motif at Cys-304–Ile-309 is the HXXXXD motif element.

Belongs to the GPAT/DAPAT family.

The protein localises to the cell inner membrane. It catalyses the reaction sn-glycerol 3-phosphate + an acyl-CoA = a 1-acyl-sn-glycero-3-phosphate + CoA. It functions in the pathway phospholipid metabolism; CDP-diacylglycerol biosynthesis; CDP-diacylglycerol from sn-glycerol 3-phosphate: step 1/3. The sequence is that of Glycerol-3-phosphate acyltransferase from Actinobacillus succinogenes (strain ATCC 55618 / DSM 22257 / CCUG 43843 / 130Z).